A 165-amino-acid polypeptide reads, in one-letter code: Protein SprT (165 aa).

The 149-residue stretch at glutamate 10 to phenylalanine 158 folds into the SprT-like domain. Residue histidine 69 coordinates Zn(2+). Glutamate 70 is an active-site residue. Histidine 73 serves as a coordination point for Zn(2+).

The protein belongs to the SprT family. Zn(2+) is required as a cofactor.

The protein localises to the cytoplasm. This is Protein SprT from Pseudomonas aeruginosa (strain LESB58).